Consider the following 503-residue polypeptide: D-xylose-proton symporter-like 2 (503 aa).

A compositionally biased stretch (polar residues) spans 1 to 15; that stretch reads MALDPEQQQPISSVS. The interval 1–32 is disordered; the sequence is MALDPEQQQPISSVSREFGKSSGEISPEREPL. Position 2 is an N-acetylalanine (Ala2). Ser26 bears the Phosphoserine mark. 12 consecutive transmembrane segments (helical) span residues 42–62, 99–119, 124–144, 146–166, 187–207, 213–233, 305–325, 346–366, 375–395, 400–420, 437–457, and 467–487; these read YSVV…LLYG, GSLY…DVIG, LILA…APTY, VLII…HAAP, FFIV…VNVH, MYAT…WLPA, ALII…PSVL, VSIL…VVID, LGGV…YLFF, VVAV…FGPI, GLSL…FAFS, and ILFC…FFIV.

It belongs to the major facilitator superfamily. Sugar transporter (TC 2.A.1.1) family.

The protein resides in the membrane. In Arabidopsis thaliana (Mouse-ear cress), this protein is D-xylose-proton symporter-like 2.